The primary structure comprises 365 residues: tRNA N6-adenosine threonylcarbamoyltransferase (365 aa).

Residues His119 and His123 each coordinate Fe cation. Residues 141–145 (LVSGG), Asp174, Gly187, and Asn288 each bind substrate. Asp316 contributes to the Fe cation binding site.

Belongs to the KAE1 / TsaD family. It depends on Fe(2+) as a cofactor.

It is found in the cytoplasm. The catalysed reaction is L-threonylcarbamoyladenylate + adenosine(37) in tRNA = N(6)-L-threonylcarbamoyladenosine(37) in tRNA + AMP + H(+). In terms of biological role, required for the formation of a threonylcarbamoyl group on adenosine at position 37 (t(6)A37) in tRNAs that read codons beginning with adenine. Is involved in the transfer of the threonylcarbamoyl moiety of threonylcarbamoyl-AMP (TC-AMP) to the N6 group of A37, together with TsaE and TsaB. TsaD likely plays a direct catalytic role in this reaction. The sequence is that of tRNA N6-adenosine threonylcarbamoyltransferase from Rhizobium johnstonii (strain DSM 114642 / LMG 32736 / 3841) (Rhizobium leguminosarum bv. viciae).